A 1085-amino-acid chain; its full sequence is Toxin VasX (1085 aa).

Positions 1-20 are disordered; it reads MSNPNQAAKTGQTNDAQNPA. A run of 4 helical transmembrane segments spans residues 753 to 773, 813 to 833, 860 to 880, and 884 to 904; these read ALGEAIYATGNTIVVAGAISA, IALVATVGMIASALETWESWG, IIFYIQFFTLLGSGIGGPSIA, and AGWMLAGFAVIGIVYLIGVIL.

The protein localises to the secreted. It is found in the host membrane. Functionally, toxin secreted by the type VI (T6SS) secretion system that acts on prokaryotic target cells. Acts in conjunction with VasW, an accessory protein to VasX, to compromise the inner membrane of prokaryotic target cells. In Vibrio cholerae serotype O1 (strain ATCC 39315 / El Tor Inaba N16961), this protein is Toxin VasX.